The sequence spans 544 residues: Transcription factor bHLH119 (544 aa).

Disordered stretches follow at residues 12 to 59 and 185 to 208; these read NGQV…QPPR and VAST…PPSV. Residues 15-29 are compositionally biased toward polar residues; the sequence is VVRTSQPQRPSSGKP. A compositionally biased stretch (pro residues) spans 50 to 59; it reads LPLPLLQPPR. T269 is subject to Phosphothreonine. Phosphoserine is present on S274. Disordered regions lie at residues 342–364 and 522–544; these read QGTE…MHNL and QPPL…STSK. The bHLH domain occupies 357–406; the sequence is RAADMHNLSERRRRERINERMKTLQELLPRCRKTDKVSMLEDVIEYVKSL. Residues 522-535 are compositionally biased toward low complexity; that stretch reads QPPLPLQGQPTSQP. A phosphoserine mark is found at S541 and S543.

As to quaternary structure, homodimer.

The protein resides in the nucleus. The chain is Transcription factor bHLH119 (BHLH119) from Arabidopsis thaliana (Mouse-ear cress).